The chain runs to 398 residues: DNA polymerase IV (398 aa).

The 183-residue stretch at 5 to 187 folds into the UmuC domain; the sequence is IFLVDMNAFF…LSIKSMHGVG (183 aa). Mg(2+)-binding residues include Asp9 and Asp105. Residue Glu106 is part of the active site.

Belongs to the DNA polymerase type-Y family. In terms of assembly, monomer. Mg(2+) serves as cofactor.

It is found in the cytoplasm. It catalyses the reaction DNA(n) + a 2'-deoxyribonucleoside 5'-triphosphate = DNA(n+1) + diphosphate. In terms of biological role, poorly processive, error-prone DNA polymerase involved in untargeted mutagenesis. Copies undamaged DNA at stalled replication forks, which arise in vivo from mismatched or misaligned primer ends. These misaligned primers can be extended by PolIV. Exhibits no 3'-5' exonuclease (proofreading) activity. May be involved in translesional synthesis, in conjunction with the beta clamp from PolIII. This chain is DNA polymerase IV, found in Alkaliphilus oremlandii (strain OhILAs) (Clostridium oremlandii (strain OhILAs)).